The following is a 604-amino-acid chain: UvrABC system protein C (604 aa).

Positions 12-90 (TAPGVYLMRD…IKQHQPRYNL (79 aa)) constitute a GIY-YIG domain. The region spanning 200–235 (KDLVSGFRQRMKEAAEGLHYEEAARWRDLLKAIDTT) is the UVR domain.

The protein belongs to the UvrC family. As to quaternary structure, interacts with UvrB in an incision complex.

It localises to the cytoplasm. The UvrABC repair system catalyzes the recognition and processing of DNA lesions. UvrC both incises the 5' and 3' sides of the lesion. The N-terminal half is responsible for the 3' incision and the C-terminal half is responsible for the 5' incision. The polypeptide is UvrABC system protein C (Trichlorobacter lovleyi (strain ATCC BAA-1151 / DSM 17278 / SZ) (Geobacter lovleyi)).